Here is a 140-residue protein sequence, read N- to C-terminus: Putative pre-16S rRNA nuclease (140 aa).

Belongs to the YqgF nuclease family.

Its subcellular location is the cytoplasm. Functionally, could be a nuclease involved in processing of the 5'-end of pre-16S rRNA. The polypeptide is Putative pre-16S rRNA nuclease (Aeromonas hydrophila).